Here is a 491-residue protein sequence, read N- to C-terminus: Transcription factor AP-2-alpha (491 aa).

The tract at residues 74–161 is disordered; sequence GASNGTARLP…GQRQSQESGL (88 aa). The short motif at 111-116 is the PPxY motif element; it reads YFPPPY. Low complexity-rich tracts occupy residues 119–128 and 142–155; these read IYPQSQDPYS and QPQPQHPGWPGQRQ. Glycyl lysine isopeptide (Lys-Gly) (interchain with G-Cter in SUMO2) cross-links involve residues K231 and K238. S293 carries the post-translational modification Phosphoserine; by PKA. Positions 334-464 are H-S-H (helix-span-helix), dimerization; that stretch reads RRKAANVTLL…YLTEALKAMD (131 aa). Residues 468 to 481 show a composition bias toward polar residues; it reads LSNNPNSHTDNSAK. The disordered stretch occupies residues 468–491; it reads LSNNPNSHTDNSAKSSDKEEKHRK. Residues 482–491 are compositionally biased toward basic and acidic residues; that stretch reads SSDKEEKHRK.

This sequence belongs to the AP-2 family. In terms of assembly, binds DNA as a dimer. Can form homodimers or heterodimers with other AP-2 family members. Interacts with WWOX. Interacts with CITED4. Interacts with UBE2I. Interacts with RALBP1 in a complex also containing EPN1 and NUMB during interphase and mitosis. Interacts with KCTD1; this interaction represses transcription activation. Interacts (via C-terminus) with CITED2 (via C-terminus); the interaction stimulates TFAP2A-transcriptional activation. Interacts (via N-terminus) with EP300 (via N-terminus); the interaction requires CITED2. Interacts with KCTD15; this interaction inhibits TFAP2A transcriptional activation.

It is found in the nucleus. In terms of biological role, sequence-specific DNA-binding protein that interacts with inducible viral and cellular enhancer elements to regulate transcription of selected genes. AP-2 factors bind to the consensus sequence 5'-GCCNNNGGC-3' and activate genes involved in a large spectrum of important biological functions including proper eye, face, body wall, limb and neural tube development. They also suppress a number of genes including MCAM/MUC18, C/EBP alpha and MYC. AP-2-alpha is the only AP-2 protein required for early morphogenesis of the lens vesicle. Together with the CITED2 coactivator, stimulates the PITX2 P1 promoter transcription activation. Associates with chromatin to the PITX2 P1 promoter region. This chain is Transcription factor AP-2-alpha (TFAP2A), found in Ovis aries (Sheep).